A 500-amino-acid polypeptide reads, in one-letter code: Lysine--tRNA ligase (500 aa).

Mg(2+) contacts are provided by glutamate 411 and glutamate 418.

It belongs to the class-II aminoacyl-tRNA synthetase family. In terms of assembly, homodimer. Requires Mg(2+) as cofactor.

Its subcellular location is the cytoplasm. The catalysed reaction is tRNA(Lys) + L-lysine + ATP = L-lysyl-tRNA(Lys) + AMP + diphosphate. This is Lysine--tRNA ligase from Azoarcus sp. (strain BH72).